Here is a 579-residue protein sequence, read N- to C-terminus: Vacuolar protein 8 (579 aa).

The N-myristoyl glycine moiety is linked to residue Gly2. Residues Cys4, Cys5, and Cys7 are each lipidated (S-palmitoyl cysteine). ARM repeat units lie at residues 39–76 (NKDQ…FAEI), 77–116 (TEKY…NLAV), 118–157 (NENK…NLAT), 159–198 (DDNK…NMTH), 200–239 (GENR…NIAV), 241–282 (ESNR…NLAS), 284–323 (TNYQ…NISI), 325–365 (PLNE…NLAA), and 409–448 (DNTK…NLIS). Positions 534–556 (QDTNIDHNGNSNNIEGNGRSNKQ) are enriched in polar residues. The disordered stretch occupies residues 534 to 560 (QDTNIDHNGNSNNIEGNGRSNKQSSEK).

This sequence belongs to the beta-catenin family.

It localises to the vacuole membrane. In terms of biological role, functions in both vacuole inheritance and protein targeting from the cytoplasm to vacuole. The protein is Vacuolar protein 8 (VAC8) of Kluyveromyces lactis (strain ATCC 8585 / CBS 2359 / DSM 70799 / NBRC 1267 / NRRL Y-1140 / WM37) (Yeast).